Consider the following 474-residue polypeptide: Nitrogenase vanadium-iron protein alpha chain (474 aa).

Residues cysteine 49, cysteine 75, and cysteine 138 each coordinate [8Fe-7S] cluster. Residues cysteine 257 and histidine 423 each coordinate [7Fe-V-9S-C-homocitryl] cluster.

This sequence belongs to the NifD/NifK/NifE/NifN family. Hexamer of two alpha, two beta, and two delta chains. It depends on [8Fe-7S] cluster as a cofactor. [7Fe-V-9S-C-homocitryl] cluster is required as a cofactor.

It catalyses the reaction N2 + 8 reduced [2Fe-2S]-[ferredoxin] + 16 ATP + 16 H2O = H2 + 8 oxidized [2Fe-2S]-[ferredoxin] + 2 NH4(+) + 16 ADP + 16 phosphate + 6 H(+). Functionally, this vanadium-iron protein is part of the nitrogenase complex that catalyzes the key enzymatic reactions in nitrogen fixation. In Azotobacter vinelandii, this protein is Nitrogenase vanadium-iron protein alpha chain (vnfD).